A 115-amino-acid polypeptide reads, in one-letter code: Large ribosomal subunit protein bL20 (115 aa).

Belongs to the bacterial ribosomal protein bL20 family.

Functionally, binds directly to 23S ribosomal RNA and is necessary for the in vitro assembly process of the 50S ribosomal subunit. It is not involved in the protein synthesizing functions of that subunit. In Chlorobium chlorochromatii (strain CaD3), this protein is Large ribosomal subunit protein bL20.